Here is a 146-residue protein sequence, read N- to C-terminus: Putative inactive cytochrome P450 2G1 (146 aa).

Heme is bound at residue C91.

It belongs to the cytochrome P450 family. Heme is required as a cofactor.

The protein is Putative inactive cytochrome P450 2G1 (CYP2G1P) of Homo sapiens (Human).